A 107-amino-acid polypeptide reads, in one-letter code: MSESGSKSSQPLASKQEKDGTEKRGRGRPRKQPPVSPGTALVGSQKEPSEVPTPKRPRGRPKGSKNKGAAKTRKVTTAPGRKPRGRPKKLEKEEEEGISQESSEEEQ.

The segment covering 1-13 has biased composition (polar residues); that stretch reads MSESGSKSSQPLA. The tract at residues 1 to 107 is disordered; sequence MSESGSKSSQ…ISQESSEEEQ (107 aa). The residue at position 2 (Ser-2) is an N-acetylserine. Lys-7 carries the post-translational modification N6-acetyllysine. An ADP-ribosylserine modification is found at Ser-8. Residue Ser-9 is modified to ADP-ribosylserine; alternate. The residue at position 9 (Ser-9) is a Phosphoserine; alternate. Residue Lys-15 is modified to N6-acetyllysine; alternate. Residue Lys-15 forms a Glycyl lysine isopeptide (Lys-Gly) (interchain with G-Cter in SUMO2); alternate linkage. Basic and acidic residues predominate over residues 15–24; the sequence is KQEKDGTEKR. The a.T hook 1 DNA-binding region spans 21–31; that stretch reads TEKRGRGRPRK. Arg-26 is modified (asymmetric dimethylarginine; alternate). The residue at position 26 (Arg-26) is an Omega-N-methylarginine; alternate. The residue at position 26 (Arg-26) is a Symmetric dimethylarginine; alternate. Phosphoserine; by HIPK2 and CDC2 is present on Ser-36. Thr-39 bears the Phosphothreonine mark. Residues Ser-44 and Ser-49 each carry the phosphoserine modification. The residue at position 53 (Thr-53) is a Phosphothreonine; by HIPK2 and CDC2. 2 DNA-binding regions (a.T hook) span residues 53–63 and 78–89; these read TPKRPRGRPKG and APGRKPRGRPKK. The tract at residues 53-77 is interaction with HIPK2; it reads TPKRPRGRPKGSKNKGAAKTRKVTT. Residues 55–74 show a composition bias toward basic residues; the sequence is KRPRGRPKGSKNKGAAKTRK. Residues Arg-58 and Arg-60 each carry the asymmetric dimethylarginine; by PRMT6; alternate modification. 2 positions are modified to omega-N-methylarginine; by PRMT6; alternate: Arg-58 and Arg-60. Positions 93-107 are enriched in acidic residues; the sequence is EEEEGISQESSEEEQ. Residues Ser-99, Ser-102, and Ser-103 each carry the phosphoserine modification.

This sequence belongs to the HMGA family. As to quaternary structure, interacts with HIPK2. Isoforms HMG-I and HMG-Y can be phosphorylated by HIPK2. Phosphorylation may modulate DNA-binding affinity. In terms of processing, methylation at Arg-58 is mutually exclusive with methylation at Arg-60.

It is found in the nucleus. Its subcellular location is the chromosome. HMG-I/Y bind preferentially to the minor groove of A+T rich regions in double-stranded DNA. It is suggested that these proteins could function in nucleosome phasing and in the 3'-end processing of mRNA transcripts. They are also involved in the transcription regulation of genes containing, or in close proximity to A+T-rich regions. The protein is High mobility group protein HMG-I/HMG-Y (Hmga1) of Mus musculus (Mouse).